Consider the following 747-residue polypeptide: Homeobox-leucine zipper protein GLABRA 2 (747 aa).

The disordered stretch occupies residues 31 to 112 (RNASSGSTNP…KKYHRHTTDQ (82 aa)). A compositionally biased stretch (polar residues) spans 58–68 (EMSSENSGPTR). The segment covering 73 to 90 (EDLEGEDHDDEEEEEEDG) has biased composition (acidic residues). A compositionally biased stretch (basic residues) spans 97 to 107 (TNKRKRKKYHR). Residues 101–160 (KRKKYHRHTTDQIRHMEALFKETPHPDEKQRQQLSKQLGLAPRQVKFWFQNRRTQIKAIQ) constitute a DNA-binding region (homeobox). Residues 155-223 (QIKAIQERHE…LDKLRAALGR (69 aa)) adopt a coiled-coil conformation. The 240-residue stretch at 250 to 489 (FALEKSRIAE…LQLHCERLVF (240 aa)) folds into the START domain.

Belongs to the HD-ZIP homeobox family. Class IV subfamily. In terms of assembly, interacts with GIR1 and GIR2. In terms of tissue distribution, expressed in individual developing trichome cells of the emerging leaf primordia. Expressed in differentiating hairless cells of root epidermis.

The protein localises to the nucleus. Its function is as follows. Transcription factor involved in the determination of epidermal cell identity. Required for correct morphological development and maturation of trichomes. Regulates the frequency of trichome initiation and determines trichome spacing. Acts as a negative factor for root hair development. Required for ectopic repression of root hair development in a subset of epidermal cells. May suppress hair formation in root epidermis by promoting differentiation into hairless epidermal cells. Directly suppresses the bHLH transcription factor genes, RHD6, RSL1, RSL2, LRL1, and LRL2, which have diverse functions in root hair development. Required for normal development of seed coat mucilage. Involved in the control of seed oil accumulation. Acts as a negative regulator of anthocyanin biosynthesis. May directly repress the expression of some component genes from the MYB-bHLH-WD40 (MBW) transcriptional activator complex. The MBW complex activates the transcription of late biosynthesis genes in the flavonoid pathway, leading to the production of anthocyanins. The chain is Homeobox-leucine zipper protein GLABRA 2 from Arabidopsis thaliana (Mouse-ear cress).